Here is a 314-residue protein sequence, read N- to C-terminus: Olfactory receptor 1E1 (314 aa).

The Extracellular segment spans residues 1–25 (MMGQNQTSISDFLLLGLPIQPEQQN). N-linked (GlcNAc...) asparagine glycosylation occurs at Asn-5. Residues 26–49 (LCYALFLAMYLTTLLGNLLIIVLI) form a helical membrane-spanning segment. Residues 50–57 (RLDSHLHT) are Cytoplasmic-facing. Residues 58 to 79 (PMYLFLSNLSFSDLCFSSVTIP) traverse the membrane as a helical segment. The Extracellular portion of the chain corresponds to 80–100 (KLLQNMQNQDPSIPYADCLTQ). An intrachain disulfide couples Cys-97 to Cys-189. The chain crosses the membrane as a helical span at residues 101–120 (MYFFLLFGDLESFLLVAMAY). The Cytoplasmic segment spans residues 121 to 139 (DRYVAICFPLHYTAIMSPM). The helical transmembrane segment at 140–158 (LCLSVVALSWVLTTFHAML) threads the bilayer. The Extracellular segment spans residues 159–195 (HTLLMARLCFCADNVIPHFFCDMSALLKLACSDTRVN). Residues 196-219 (EWVIFIMGGLILVIPFLLILGSYA) form a helical membrane-spanning segment. The Cytoplasmic segment spans residues 220-236 (RIVSSILKVPSSKGICK). Residues 237-259 (ALSTCGSHLSVVSLFYGTVIGLY) form a helical membrane-spanning segment. The Extracellular portion of the chain corresponds to 260-272 (LCPSANSSTLKDT). A helical transmembrane segment spans residues 273 to 292 (VMAMIYTVVTPMLNPFIYSL). Topologically, residues 293-314 (RNRDMKGALSRVIHQKKTFFSL) are cytoplasmic.

It belongs to the G-protein coupled receptor 1 family.

It localises to the cell membrane. Its function is as follows. Odorant receptor. This chain is Olfactory receptor 1E1 (OR1E1), found in Pan troglodytes (Chimpanzee).